The following is a 446-amino-acid chain: sn-2 acyl-lipid omega-3 desaturase (ferredoxin), chloroplastic (446 aa).

The transit peptide at 1–65 (MANLVLSECG…DGFTRNWALN (65 aa)) directs the protein to the chloroplast. 2 consecutive transmembrane segments (helical) span residues 118–138 (LSYVVRDVAIVFALAAGAAYL) and 141–161 (WIVWPLYWLAQGTMFWALFVL). A Histidine box-1 motif is present at residues 163 to 167 (HDCGH). The short motif at 199-203 (HRTHH) is the Histidine box-2 element. The next 3 membrane-spanning stretches (helical) occupy residues 231–250 (RFFRFTLPLVMLAYPFYLWA), 279–299 (TACWTAMAALLVCLNFTIGPI), and 302–322 (LKLYGIPYWINVMWLDFVTYL). Residues 366–370 (HVIHH) carry the Histidine box-3 motif.

Belongs to the fatty acid desaturase type 1 family. In terms of tissue distribution, most abundant in leaves and seedlings.

It localises to the plastid. The protein resides in the chloroplast inner membrane. It catalyses the reaction a (7Z,10Z)-hexadecadienoyl-containing glycerolipid + 2 reduced [2Fe-2S]-[ferredoxin] + O2 + 2 H(+) = a (7Z,10Z,13Z)-hexadecatrienoyl-containing glycerolipid + 2 oxidized [2Fe-2S]-[ferredoxin] + 2 H2O. It carries out the reaction a (9Z,12Z)-octadecadienoyl-containing glycerolipid + 2 reduced [2Fe-2S]-[ferredoxin] + O2 + 2 H(+) = (9Z,12Z,15Z)-octadecatrienoyl-containing glycerolipid + 2 oxidized [2Fe-2S]-[ferredoxin] + 2 H2O. It functions in the pathway lipid metabolism; polyunsaturated fatty acid biosynthesis. Functionally, chloroplast omega-3 fatty acid desaturase introduces the third double bond in the biosynthesis of 16:3 and 18:3 fatty acids, important constituents of plant membranes. It is thought to use ferredoxin as an electron donor and to act on fatty acids esterified to galactolipids, sulfolipids and phosphatidylglycerol. The chain is sn-2 acyl-lipid omega-3 desaturase (ferredoxin), chloroplastic from Arabidopsis thaliana (Mouse-ear cress).